A 221-amino-acid chain; its full sequence is Very-long-chain (3R)-3-hydroxyacyl-CoA dehydratase PASTICCINO 2B (221 aa).

Over 1–11 (MTGVGSAVRRL) the chain is Cytoplasmic. A helical transmembrane segment spans residues 12 to 32 (YLSVYNWAVFFGWAQVLYYAV). Over 33-51 (TTLLESGHEAVYAAVERPL) the chain is Lumenal. A helical membrane pass occupies residues 52-70 (QFAQTAAFLEILHGLVGLV). The Cytoplasmic segment spans residues 71-76 (RSPVSA). Residues 77-95 (TLPQIGSRLFLTWGILWSF) traverse the membrane as a helical segment. Residues 96–100 (PETHS) lie on the Lumenal side of the membrane. Residues 101 to 121 (HILVTSLVISWSITEIIRYSF) form a helical membrane-spanning segment. The Cytoplasmic segment spans residues 122 to 141 (FGMKETFGFAPSWLLWLRYS). A helical transmembrane segment spans residues 142 to 165 (TFMVLYPTGISSEVGLIYIALPYM). Active-site residues include Y147 and E154. Topologically, residues 166–184 (KATEKYCLRMPNKWNFSFD) are lumenal. A helical transmembrane segment spans residues 185–209 (FSYASILSLAVYVPGSPHMFTYMLA). Residues 210–221 (QRKKALAKAKAA) are Cytoplasmic-facing.

This sequence belongs to the very long-chain fatty acids dehydratase HACD family.

It is found in the endoplasmic reticulum membrane. It carries out the reaction a very-long-chain (3R)-3-hydroxyacyl-CoA = a very-long-chain (2E)-enoyl-CoA + H2O. It functions in the pathway lipid metabolism; fatty acid biosynthesis. In terms of biological role, catalyzes the third of the four reactions of the long-chain fatty acids elongation cycle. This endoplasmic reticulum-bound enzymatic process, allows the addition of two carbons to the chain of long- and very long-chain fatty acids/VLCFAs per cycle. This enzyme catalyzes the dehydration of the 3-hydroxyacyl-CoA intermediate into trans-2,3-enoyl-CoA, within each cycle of fatty acid elongation. Thereby, it participates in the production of VLCFAs of different chain lengths that are involved in multiple biological processes as precursors of membrane lipids and lipid mediators. May be an anti-phosphatase that prevents CDKA-1 dephosphorylation and activation. Involved in the hormonal control of cell division and differentiation. Required for proliferation control of meristematic and non-meristematic cells. Negative regulator of the cell cycle. This is Very-long-chain (3R)-3-hydroxyacyl-CoA dehydratase PASTICCINO 2B (PAS2B) from Oryza sativa subsp. japonica (Rice).